A 1013-amino-acid chain; its full sequence is Prominin-like protein (1013 aa).

A helical transmembrane segment spans residues 32 to 52 (IAYLAICGLSVAIFGFALATL). N-linked (GlcNAc...) asparagine glycosylation is found at N99 and N116. Helical transmembrane passes span 215-235 (CGIC…IAFV), 489-509 (VVSL…IFAL), and 535-555 (LLLA…VGLF). N576, N618, N803, and N824 each carry an N-linked (GlcNAc...) asparagine glycan. Residues 852-872 (INGFWVGILLCALLFLPILFV) form a helical membrane-spanning segment. The interval 918–1013 (ANVPKKRRKA…YYYPGASEQD (96 aa)) is disordered. N949 carries an N-linked (GlcNAc...) asparagine glycan. A compositionally biased stretch (gly residues) spans 950–963 (RSGGDRGGGGGDGA).

The protein belongs to the prominin family.

The protein resides in the membrane. The protein is Prominin-like protein of Drosophila melanogaster (Fruit fly).